A 389-amino-acid polypeptide reads, in one-letter code: Na(+)/H(+) antiporter NhaA 1 (389 aa).

Transmembrane regions (helical) follow at residues 14–34 (AGGI…NSPL), 47–67 (FGMS…FLLI), 87–107 (IFPA…YVAF), 117–137 (GWAI…ALLG), 146–166 (VFLL…IALF), 171–191 (LSTL…MLNA), 197–217 (LIWY…SGVH), 252–272 (VAFA…LEGV), 280–300 (MLPL…IFTF), 321–341 (IFAV…ISSL), and 356–376 (LGIL…LHVS).

The protein belongs to the NhaA Na(+)/H(+) (TC 2.A.33) antiporter family.

The protein resides in the cell inner membrane. The enzyme catalyses Na(+)(in) + 2 H(+)(out) = Na(+)(out) + 2 H(+)(in). In terms of biological role, na(+)/H(+) antiporter that extrudes sodium in exchange for external protons. The sequence is that of Na(+)/H(+) antiporter NhaA 1 from Vibrio vulnificus (strain CMCP6).